We begin with the raw amino-acid sequence, 309 residues long: Tagatose-6-phosphate kinase (309 aa).

The protein belongs to the carbohydrate kinase PfkB family. LacC subfamily.

It carries out the reaction D-tagatofuranose 6-phosphate + ATP = D-tagatofuranose 1,6-bisphosphate + ADP + H(+). It functions in the pathway carbohydrate metabolism; D-tagatose 6-phosphate degradation; D-glyceraldehyde 3-phosphate and glycerone phosphate from D-tagatose 6-phosphate: step 1/2. The protein is Tagatose-6-phosphate kinase of Streptococcus pneumoniae (strain Hungary19A-6).